We begin with the raw amino-acid sequence, 120 residues long: Glycine cleavage system H protein (120 aa).

The 83-residue stretch at 17 to 99 (VATVGITAHA…MGAGWFFKLK (83 aa)) folds into the Lipoyl-binding domain. K58 carries the N6-lipoyllysine modification.

This sequence belongs to the GcvH family. As to quaternary structure, the glycine cleavage system is composed of four proteins: P, T, L and H. (R)-lipoate serves as cofactor.

The glycine cleavage system catalyzes the degradation of glycine. The H protein shuttles the methylamine group of glycine from the P protein to the T protein. The chain is Glycine cleavage system H protein from Rhizobium rhizogenes (strain K84 / ATCC BAA-868) (Agrobacterium radiobacter).